The following is a 545-amino-acid chain: Chaperonin GroEL (545 aa).

ATP contacts are provided by residues 30-33, Lys51, 87-91, Gly415, and Asp495; these read TLGP and DGTTT.

This sequence belongs to the chaperonin (HSP60) family. Forms a cylinder of 14 subunits composed of two heptameric rings stacked back-to-back. Interacts with the co-chaperonin GroES.

It localises to the cytoplasm. It catalyses the reaction ATP + H2O + a folded polypeptide = ADP + phosphate + an unfolded polypeptide.. Functionally, together with its co-chaperonin GroES, plays an essential role in assisting protein folding. The GroEL-GroES system forms a nano-cage that allows encapsulation of the non-native substrate proteins and provides a physical environment optimized to promote and accelerate protein folding. In Shewanella baltica (strain OS185), this protein is Chaperonin GroEL.